The chain runs to 105 residues: Small ribosomal subunit protein uS10c (105 aa).

It belongs to the universal ribosomal protein uS10 family. In terms of assembly, part of the 30S ribosomal subunit.

It localises to the plastid. The protein localises to the chloroplast. Its function is as follows. Involved in the binding of tRNA to the ribosomes. The polypeptide is Small ribosomal subunit protein uS10c (Gracilaria tenuistipitata var. liui (Red alga)).